The primary structure comprises 288 residues: Protease HtpX homolog (288 aa).

Transmembrane regions (helical) follow at residues 1–21 (MHTIKTVLLLGVLTGLFLLAG) and 23–43 (IIGGQTGMIIAFFFAMAMNFF). Residue histidine 130 coordinates Zn(2+). Glutamate 131 is an active-site residue. Histidine 134 contributes to the Zn(2+) binding site. The next 2 membrane-spanning stretches (helical) occupy residues 140-160 (ILISSIAATIGGAISMLAEMA) and 175-195 (IGGLIGSLLLFILAPIAAMII). Glutamate 204 is a binding site for Zn(2+).

The protein belongs to the peptidase M48B family. Zn(2+) is required as a cofactor.

It localises to the cell inner membrane. The protein is Protease HtpX homolog of Persephonella marina (strain DSM 14350 / EX-H1).